The sequence spans 119 residues: Integration host factor subunit alpha (119 aa).

The segment at 96 to 119 (INGQQGSGKMNGEASHEQLSAEPE) is disordered.

It belongs to the bacterial histone-like protein family. In terms of assembly, heterodimer of an alpha and a beta chain.

This protein is one of the two subunits of integration host factor, a specific DNA-binding protein that functions in genetic recombination as well as in transcriptional and translational control. The chain is Integration host factor subunit alpha from Bradyrhizobium sp. (strain BTAi1 / ATCC BAA-1182).